Here is a 236-residue protein sequence, read N- to C-terminus: Phosphoserine phosphatase (236 aa).

Aspartate 30 functions as the Nucleophile in the catalytic mechanism. The Mg(2+) site is built by aspartate 30 and aspartate 32. Aspartate 32 (proton donor) is an active-site residue. Substrate is bound by residues glutamate 39, arginine 76, 120–121 (SG), and lysine 169. Residue aspartate 192 coordinates Mg(2+). Substrate is bound at residue asparagine 195.

The protein belongs to the HAD-like hydrolase superfamily. SerB family. The cofactor is Mg(2+).

The enzyme catalyses O-phospho-L-serine + H2O = L-serine + phosphate. It catalyses the reaction O-phospho-D-serine + H2O = D-serine + phosphate. It functions in the pathway amino-acid biosynthesis; L-serine biosynthesis; L-serine from 3-phospho-D-glycerate: step 3/3. The chain is Phosphoserine phosphatase from Polaromonas sp. (strain JS666 / ATCC BAA-500).